A 332-amino-acid polypeptide reads, in one-letter code: tRNA-dihydrouridine(20/20a) synthase (332 aa).

FMN is bound by residues 19-21 (PML) and Gln71. Catalysis depends on Cys101, which acts as the Proton donor. FMN-binding positions include Lys140, His173, 213-215 (NGG), and 235-236 (GR).

The protein belongs to the Dus family. DusA subfamily. FMN is required as a cofactor.

It carries out the reaction 5,6-dihydrouridine(20) in tRNA + NADP(+) = uridine(20) in tRNA + NADPH + H(+). The catalysed reaction is 5,6-dihydrouridine(20) in tRNA + NAD(+) = uridine(20) in tRNA + NADH + H(+). It catalyses the reaction 5,6-dihydrouridine(20a) in tRNA + NADP(+) = uridine(20a) in tRNA + NADPH + H(+). The enzyme catalyses 5,6-dihydrouridine(20a) in tRNA + NAD(+) = uridine(20a) in tRNA + NADH + H(+). Its function is as follows. Catalyzes the synthesis of 5,6-dihydrouridine (D), a modified base found in the D-loop of most tRNAs, via the reduction of the C5-C6 double bond in target uridines. Specifically modifies U20 and U20a in tRNAs. This chain is tRNA-dihydrouridine(20/20a) synthase, found in Salmonella typhimurium (strain LT2 / SGSC1412 / ATCC 700720).